The following is a 90-amino-acid chain: Small ribosomal subunit protein uS15 (90 aa).

Belongs to the universal ribosomal protein uS15 family. In terms of assembly, part of the 30S ribosomal subunit. Forms a bridge to the 50S subunit in the 70S ribosome, contacting the 23S rRNA.

One of the primary rRNA binding proteins, it binds directly to 16S rRNA where it helps nucleate assembly of the platform of the 30S subunit by binding and bridging several RNA helices of the 16S rRNA. Its function is as follows. Forms an intersubunit bridge (bridge B4) with the 23S rRNA of the 50S subunit in the ribosome. The chain is Small ribosomal subunit protein uS15 from Mycoplasmoides gallisepticum (strain R(low / passage 15 / clone 2)) (Mycoplasma gallisepticum).